Here is a 216-residue protein sequence, read N- to C-terminus: Inactive ribonuclease-like protein 10 (216 aa).

The first 26 residues, 1–26 (MKLNLVQIFFMLLMLLLGLGMGLGLG), serve as a signal peptide directing secretion. A disordered region spans residues 43–65 (EFWSSDSQDKAEATEEGDGTQTT).

The protein belongs to the pancreatic ribonuclease family. The N-terminus is blocked. Glycosylated.

The protein localises to the secreted. Its function is as follows. Secreted proximal epididymal protein required for post-testicular sperm maturation and male fertility. May be involved in sperm adhesion to the egg zona pellucida. Does not have ribonuclease activity. In Homo sapiens (Human), this protein is Inactive ribonuclease-like protein 10 (RNASE10).